The following is a 565-amino-acid chain: Urocanate hydratase (565 aa).

NAD(+) contacts are provided by residues 61–62 (GG), Q139, 185–187 (GMG), E205, R210, 251–252 (NA), 272–276 (QTSAH), 282–283 (YL), and Y331. C419 is a catalytic residue. Positions 453-472 (LDSGSVASPNRETESMRDGS) are disordered. The segment covering 463–472 (RETESMRDGS) has biased composition (basic and acidic residues). G501 is an NAD(+) binding site.

The protein belongs to the urocanase family. Requires NAD(+) as cofactor.

Its subcellular location is the cytoplasm. The enzyme catalyses 4-imidazolone-5-propanoate = trans-urocanate + H2O. It functions in the pathway amino-acid degradation; L-histidine degradation into L-glutamate; N-formimidoyl-L-glutamate from L-histidine: step 2/3. Its function is as follows. Catalyzes the conversion of urocanate to 4-imidazolone-5-propionate. The protein is Urocanate hydratase of Pseudomonas syringae pv. tomato (strain ATCC BAA-871 / DC3000).